Reading from the N-terminus, the 109-residue chain is Aquaporin-2 (109 aa).

Residues 1–6 (SVAFSR) are Cytoplasmic-facing. Residues 7 to 27 (AVFAEFLATLLFVFFGLGSAL) traverse the membrane as a helical segment. The Extracellular portion of the chain corresponds to 28 to 35 (NWPQALPS). The chain crosses the membrane as a helical span at residues 36–54 (VLQIAMAFGLGIGTLVQAL). Topologically, residues 55–59 (GHVSG) are cytoplasmic. The discontinuously helical intramembrane region spans 60–69 (AHINPAVTVA). An NPA 1 motif is present at residues 63–65 (NPA). At 70–80 (CLVGCHVSFLR) the chain is on the cytoplasmic side. A helical transmembrane segment spans residues 81–102 (AAFYVAAQLLGAVAGAALLHEI). Topologically, residues 103-109 (TPPHVRG) are extracellular.

Belongs to the MIP/aquaporin (TC 1.A.8) family. Homotetramer. In terms of processing, serine phosphorylation is necessary and sufficient for expression at the apical membrane. Endocytosis is not phosphorylation-dependent. Post-translationally, N-glycosylated.

The protein resides in the apical cell membrane. It is found in the basolateral cell membrane. It localises to the cell membrane. Its subcellular location is the cytoplasmic vesicle membrane. The protein localises to the golgi apparatus. The protein resides in the trans-Golgi network membrane. The catalysed reaction is H2O(in) = H2O(out). It catalyses the reaction glycerol(in) = glycerol(out). Its function is as follows. Forms a water-specific channel that provides the plasma membranes of renal collecting duct with high permeability to water, thereby permitting water to move in the direction of an osmotic gradient. Plays an essential role in renal water homeostasis. Could also be permeable to glycerol. The sequence is that of Aquaporin-2 from Canis lupus familiaris (Dog).